The following is a 203-amino-acid chain: Thymidylate kinase (203 aa).

9 to 16 is an ATP binding site; it reads GPEGAGKT.

Belongs to the thymidylate kinase family.

It carries out the reaction dTMP + ATP = dTDP + ADP. In terms of biological role, phosphorylation of dTMP to form dTDP in both de novo and salvage pathways of dTTP synthesis. The protein is Thymidylate kinase of Staphylococcus epidermidis (strain ATCC 35984 / DSM 28319 / BCRC 17069 / CCUG 31568 / BM 3577 / RP62A).